The chain runs to 206 residues: Large ribosomal subunit protein uL4 (206 aa).

A disordered region spans residues 63 to 96; it reads MYKQKGTGRARHHSARAPQFRGGGKAHGPVVRSH. Residues 64–77 are compositionally biased toward basic residues; the sequence is YKQKGTGRARHHSA.

Belongs to the universal ribosomal protein uL4 family. In terms of assembly, part of the 50S ribosomal subunit.

Its function is as follows. One of the primary rRNA binding proteins, this protein initially binds near the 5'-end of the 23S rRNA. It is important during the early stages of 50S assembly. It makes multiple contacts with different domains of the 23S rRNA in the assembled 50S subunit and ribosome. Forms part of the polypeptide exit tunnel. The chain is Large ribosomal subunit protein uL4 from Allorhizobium ampelinum (strain ATCC BAA-846 / DSM 112012 / S4) (Agrobacterium vitis (strain S4)).